A 110-amino-acid chain; its full sequence is Light-harvesting complex-like protein OHP1, chloroplastic (110 aa).

Residues 1 to 41 constitute a chloroplast transit peptide; it reads MSSSPLSSSLFHPLSTLSTHCHGRRQNLCFNRKQQPFVVRA. The Stromal segment spans residues 42–74; it reads AKLPEGVIVPKAQPKSQPAFLGFTQTAEIWNSR. Residues 75–95 form a helical membrane-spanning segment; it reads ACMIGLIGTFIVELILNKGIL. At 96–110 the chain is on the lumenal side; it reads ELIGVEIGKGLDLPL.

It belongs to the ELIP/psbS family. In terms of assembly, may bind chlorophyll and form dimers in the thylakoid membrane. Component of a high molecular weight complex containing OHP1, OHP2 and HCF244, and PSII core proteins D1/D2, HCF136 and HCF173. Interacts with HCF244. Forms a trimeric complex with OHP2 and HCF244 that mutually stabilizes each subunit. As to expression, mostly expressed in cotyledons and shoot apices.

Its subcellular location is the plastid. It is found in the chloroplast thylakoid membrane. In terms of biological role, may play a photoprotective role in the thylakoid membrane in response to light stress. Involved in photosystems I (PSI) and II (PSII) core proteins function. Forms a trimeric complex with OHP2 and HCF244 that is required to promote PSII core subunit assembly. The trimeric complex forms a transient PSII reaction center-like complex with PsbA, PsbD, PsbE, PsbF and PsbI subunits in thylakoids for early assembly of PSII as well as PSII repair. The trimeric complex is required for the recruitment of ribosomes to the psbA mRNA during PSII biogenesis and repair. Forms a heterodimer with OHP1 that binds chlorophylls and carotenoids, and that may function in the delivery of pigments to the PsbA subunit of PSII. The sequence is that of Light-harvesting complex-like protein OHP1, chloroplastic from Arabidopsis thaliana (Mouse-ear cress).